The chain runs to 474 residues: Photosystem II CP43 reaction center protein (474 aa).

The propeptide occupies 1 to 14 (MKTLYSLRRFYPVE). Position 15 is an N-acetylthreonine (Thr-15). Thr-15 carries the phosphothreonine modification. The next 5 helical transmembrane spans lie at 69–93 (LFEVAHFVPEKPMYEQGLILLPHLA), 134–155 (LLGPETLEESFPFFGYVWKDRN), 178–201 (KALYFGGVYDTWAPGGGEMLRKIT), 256–276 (KPFAWARRALVWSGEAYLSYS), and 292–313 (WFNNTAYPSEFYGPTGPEASQA). Glu-368 is a [CaMn4O5] cluster binding site. Residues 448 to 472 (RARAAAAGFEKGIDRDFEPVLSMTP) traverse the membrane as a helical segment.

This sequence belongs to the PsbB/PsbC family. PsbC subfamily. As to quaternary structure, PSII is composed of 1 copy each of membrane proteins PsbA, PsbB, PsbC, PsbD, PsbE, PsbF, PsbH, PsbI, PsbJ, PsbK, PsbL, PsbM, PsbT, PsbX, PsbY, PsbZ, Psb30/Ycf12, at least 3 peripheral proteins of the oxygen-evolving complex and a large number of cofactors. It forms dimeric complexes. It depends on Binds multiple chlorophylls and provides some of the ligands for the Ca-4Mn-5O cluster of the oxygen-evolving complex. It may also provide a ligand for a Cl- that is required for oxygen evolution. PSII binds additional chlorophylls, carotenoids and specific lipids. as a cofactor.

Its subcellular location is the plastid. It localises to the chloroplast thylakoid membrane. In terms of biological role, one of the components of the core complex of photosystem II (PSII). It binds chlorophyll and helps catalyze the primary light-induced photochemical processes of PSII. PSII is a light-driven water:plastoquinone oxidoreductase, using light energy to abstract electrons from H(2)O, generating O(2) and a proton gradient subsequently used for ATP formation. In Citrus sinensis (Sweet orange), this protein is Photosystem II CP43 reaction center protein.